The following is a 379-amino-acid chain: Queuine tRNA-ribosyltransferase (379 aa).

The active-site Proton acceptor is Asp94. Substrate-binding positions include 94-98 (DSGGF), Asp148, Gln191, and Gly218. Residues 249–255 (GVGSPDS) form an RNA binding region. Asp268 serves as the catalytic Nucleophile. The interval 273–277 (TRIAR) is RNA binding; important for wobble base 34 recognition. Zn(2+)-binding residues include Cys306, Cys308, Cys311, and His337.

The protein belongs to the queuine tRNA-ribosyltransferase family. Homodimer. Within each dimer, one monomer is responsible for RNA recognition and catalysis, while the other monomer binds to the replacement base PreQ1. Zn(2+) serves as cofactor.

It catalyses the reaction 7-aminomethyl-7-carbaguanine + guanosine(34) in tRNA = 7-aminomethyl-7-carbaguanosine(34) in tRNA + guanine. Its pathway is tRNA modification; tRNA-queuosine biosynthesis. Catalyzes the base-exchange of a guanine (G) residue with the queuine precursor 7-aminomethyl-7-deazaguanine (PreQ1) at position 34 (anticodon wobble position) in tRNAs with GU(N) anticodons (tRNA-Asp, -Asn, -His and -Tyr). Catalysis occurs through a double-displacement mechanism. The nucleophile active site attacks the C1' of nucleotide 34 to detach the guanine base from the RNA, forming a covalent enzyme-RNA intermediate. The proton acceptor active site deprotonates the incoming PreQ1, allowing a nucleophilic attack on the C1' of the ribose to form the product. After dissociation, two additional enzymatic reactions on the tRNA convert PreQ1 to queuine (Q), resulting in the hypermodified nucleoside queuosine (7-(((4,5-cis-dihydroxy-2-cyclopenten-1-yl)amino)methyl)-7-deazaguanosine). In Halalkalibacterium halodurans (strain ATCC BAA-125 / DSM 18197 / FERM 7344 / JCM 9153 / C-125) (Bacillus halodurans), this protein is Queuine tRNA-ribosyltransferase.